We begin with the raw amino-acid sequence, 396 residues long: Methylthioribose kinase (396 aa).

Residues asparagine 44, lysine 61, and 115 to 117 each bind ATP; that span reads EDL. Aspartate 233 contacts substrate. 250 to 252 contacts ATP; sequence DPE. Arginine 340 serves as a coordination point for substrate.

It belongs to the methylthioribose kinase family. As to quaternary structure, homodimer.

The enzyme catalyses 5-(methylsulfanyl)-D-ribose + ATP = 5-(methylsulfanyl)-alpha-D-ribose 1-phosphate + ADP + H(+). Its pathway is amino-acid biosynthesis; L-methionine biosynthesis via salvage pathway; S-methyl-5-thio-alpha-D-ribose 1-phosphate from S-methyl-5'-thioadenosine (hydrolase route): step 2/2. Catalyzes the phosphorylation of methylthioribose into methylthioribose-1-phosphate. This Geobacillus kaustophilus (strain HTA426) protein is Methylthioribose kinase.